A 112-amino-acid polypeptide reads, in one-letter code: Flowering-promoting factor 1-like protein 2 (112 aa).

The protein belongs to the FPF1 family. As to expression, expressed in leaves and in some parts of the flowers, mainly in the sepals.

Modulates the competence to flowering of apical meristems. The polypeptide is Flowering-promoting factor 1-like protein 2 (FLP2) (Arabidopsis thaliana (Mouse-ear cress)).